A 149-amino-acid polypeptide reads, in one-letter code: Small ribosomal subunit protein uS19 (149 aa).

It belongs to the universal ribosomal protein uS19 family.

Protein S19 forms a complex with S13 that binds strongly to the 16S ribosomal RNA. In Methanopyrus kandleri (strain AV19 / DSM 6324 / JCM 9639 / NBRC 100938), this protein is Small ribosomal subunit protein uS19.